The primary structure comprises 454 residues: Lipase member H (454 aa).

Residues 1-23 (MIYRKIIWGILYVTLMLFDTHRA) form the signal peptide. N-linked (GlcNAc...) asparagine glycans are attached at residues Asn73, Asn137, and Asn151. The Nucleophile role is filled by Ser161. Catalysis depends on Asp185, which acts as the Charge relay system. A disulfide bridge links Cys240 with Cys253. The Charge relay system role is filled by His255. A glycan (N-linked (GlcNAc...) asparagine) is linked at Asn267. Disulfide bonds link Cys277-Cys288 and Cys291-Cys299. Asn358 is a glycosylation site (N-linked (GlcNAc...) asparagine). Cys430 and Cys449 form a disulfide bridge.

This sequence belongs to the AB hydrolase superfamily. Lipase family.

Its subcellular location is the secreted. It localises to the cell membrane. The enzyme catalyses 1-hexadecanoyl-2-(9Z-octadecenoyl)-sn-glycero-3-phosphate + H2O = 2-(9Z-octadecenoyl)-sn-glycero-3-phosphate + hexadecanoate + H(+). Its function is as follows. Hydrolyzes specifically phosphatidic acid (PA) to produce 2-acyl lysophosphatidic acid (LPA; a potent bioactive lipid mediator) and fatty acid. Does not hydrolyze other phospholipids, like phosphatidylserine (PS), phosphatidylcholine (PC) and phosphatidylethanolamine (PE) or triacylglycerol (TG). The protein is Lipase member H (liph) of Danio rerio (Zebrafish).